Reading from the N-terminus, the 490-residue chain is 5'-3' exonuclease PLD3 (490 aa).

Over Met-1–Trp-38 the chain is Cytoplasmic. The helical; Signal-anchor for type II membrane protein transmembrane segment at Val-39–Leu-59 threads the bilayer. Over Trp-60–Leu-490 the chain is Lumenal. Cystine bridges form between Cys-77/Cys-239 and Cys-81/Cys-237. N-linked (GlcNAc...) asparagine glycans are attached at residues Asn-97 and Asn-132. One can recognise a PLD phosphodiesterase 1 domain in the interval Thr-196–Ser-223. Residues His-201, Lys-203, and Asp-208 contribute to the active site. Residue His-201 is the Proton donor of the active site. The phosphate site is built by His-201 and Lys-203. A phosphate-binding site is contributed by Asn-218. 3 N-linked (GlcNAc...) asparagine glycosylation sites follow: Asn-236, Asn-284, and Asn-387. Cys-366 and Cys-487 are oxidised to a cystine. In terms of domain architecture, PLD phosphodiesterase 2 spans Tyr-411 to Tyr-437. His-416 is a phosphate binding site. His-416 acts as the Nucleophile in catalysis. Phe-438 is a Mg(2+) binding site.

This sequence belongs to the phospholipase D family. Homodimer. Interacts with APP. Post-translationally, N-glycosylated. Proteolytically processed to a soluble form that is stable within endosomes and lysosomes. During transport through the secretory pathway becomes proteolysed by cysteine proteases, thereby releasing a stable soluble lysosomal lumenal polypeptide, whereas the transmembrane-bound fragment is rapidly degraded. Its transport route to lysosomes involves ubiquitination and the ESCRT complex. In terms of processing, ubiquitinated. Ubiquitination mediates sorting into lysosomes.

Its subcellular location is the endoplasmic reticulum membrane. The protein resides in the lysosome lumen. It localises to the early endosome membrane. The protein localises to the late endosome membrane. It is found in the golgi apparatus membrane. Its subcellular location is the endosome membrane. It carries out the reaction Exonucleolytic cleavage in the 5'- to 3'-direction to yield nucleoside 3'-phosphates.. The catalysed reaction is a 5'-end 5'-dephospho-ribonucleotidyl-ribonucleotide-RNA + H2O = a ribonucleoside 3'-phosphate + a 5'-end dephospho-ribonucleoside-RNA + H(+). The enzyme catalyses a ribonucleoside 3'-phosphate-2'-3'-cyclophospho-GMP + H2O = a ribonucleoside 3'-phosphate + 2',3'-cyclophospho-GMP + H(+). It catalyses the reaction a 5'-end 5'-dephospho-2'-deoxyribonucleotidyl-2'-deoxyribonucleotide in single-stranded DNA + H2O = a 5'-end dephospho-2'-deoxyribonucleoside in single-stranded DNA + a 2'-deoxyribonucleoside 3'-phosphate + H(+). It carries out the reaction a 5'-end 5'-phospho-2'-deoxyribonucleotide in single-stranded DNA + H2O = a 5'-end 5'-dephospho-2'-deoxyribonucleotide in single-stranded DNA + phosphate. The catalysed reaction is a 3-lyso-sn-glycero-1-phospho-(3'-acyl-1'-sn-glycerol) + a 1-acyl-sn-glycerol = a 3-acyl-sn-glycero-1-phospho-(3'-acyl-1'-sn-glycerol) + glycerol. The enzyme catalyses 3-lyso-sn-glycero-1-phospho-(3'-(9Z-octadecenoyl)-1'-sn-glycerol) + 1-(9Z-octadecenoyl)-sn-glycerol = 3-(9Z-octadecenoyl)-sn-glycero-1-phospho-(3'-(9Z-octadecenoyl)-1'-sn-glycerol) + glycerol. Its function is as follows. 5'-&gt;3' exonuclease that hydrolyzes the phosphodiester bond of single-stranded DNA (ssDNA) and RNA molecules to form nucleoside 3'-monophosphates and 5'-end 5'-hydroxy deoxyribonucleotide/ribonucleotide fragments. Partially redundant with PLD4, can cleave all four nucleotides displaying higher efficiency for ssDNA and RNA fragments initiated with uridine and guanosine residues and lower efficiency for cytidine-initiated substrates. As a result, it does not always degrade polynucleotides to the single nucleotide level, it can stall at specific sites sparing certain fragments from exonucleolytic degradation. Processes self and pathogenic ssDNA and RNA molecules that reach the endolysosomal compartment via phagocytosis or autophagy and may serve as 'danger' signals for recognition by innate immune receptors such as toll-like receptors (TLRs). Degrades mitochondrial CpG-rich ssDNA fragments to prevent TLR9 activation and autoinflammatory response, but it can cleave viral RNA to generate ligands for TLR7 activation and initiate antiviral immune responses. In plasmacytoid dendritic cells, it cooperates with endonuclease RNASET2 to release 2',3'-cyclic guanosine monophosphate (2',3'-cGMP), a potent stimulatory ligand for TLR7. Produces 2',3'-cGMPs and cytidine-rich RNA fragments that occupy TLR7 ligand-binding pockets and trigger a signaling-competent state. Can exert polynucleotide phosphatase activity toward 5'-phosphorylated ssDNA substrates although at a slow rate. Transphosphatidylase that catalyzes the exchange with R to S stereo-inversion of the glycerol moiety between (S,R)-lysophosphatidylglycerol (LPG) and monoacylglycerol (MAG) substrates to yield (S,S)-bis(monoacylglycero)phosphate (BMP). Can synthesize a variety of (S,S)-BMPs representing the main phospholipid constituent of lysosomal intralumenal vesicle (ILV) membranes that bind acid hydrolases for lipid degradation. Regulates the homeostasis and interorganellar communication of the endolysosomal system with an overall impact on cellular removal of dysfunctional organelles via autophagy as well as proper protein and lipid turnover. May play a role in myotube formation in response to ER stress. In Bos taurus (Bovine), this protein is 5'-3' exonuclease PLD3 (PLD3).